The following is a 155-amino-acid chain: Interleukin-2 (155 aa).

The signal sequence occupies residues 1–20 (MYKIQLLSCIALTLALVANG). T23 carries O-linked (GalNAc...) threonine glycosylation. C79 and C127 are joined by a disulfide.

The protein belongs to the IL-2 family.

The protein resides in the secreted. Cytokine produced by activated CD4-positive helper T-cells and to a lesser extend activated CD8-positive T-cells and natural killer (NK) cells that plays pivotal roles in the immune response and tolerance. Binds to a receptor complex composed of either the high-affinity trimeric IL-2R (IL2RA/CD25, IL2RB/CD122 and IL2RG/CD132) or the low-affinity dimeric IL-2R (IL2RB and IL2RG). Interaction with the receptor leads to oligomerization and conformation changes in the IL-2R subunits resulting in downstream signaling starting with phosphorylation of JAK1 and JAK3. In turn, JAK1 and JAK3 phosphorylate the receptor to form a docking site leading to the phosphorylation of several substrates including STAT5. This process leads to activation of several pathways including STAT, phosphoinositide-3-kinase/PI3K and mitogen-activated protein kinase/MAPK pathways. Functions as a T-cell growth factor and can increase NK-cell cytolytic activity as well. Promotes strong proliferation of activated B-cells and subsequently immunoglobulin production. Plays a pivotal role in regulating the adaptive immune system by controlling the survival and proliferation of regulatory T-cells, which are required for the maintenance of immune tolerance. Moreover, participates in the differentiation and homeostasis of effector T-cell subsets, including Th1, Th2, Th17 as well as memory CD8-positive T-cells. This chain is Interleukin-2 (IL2), found in Boselaphus tragocamelus (Nilgai).